A 156-amino-acid polypeptide reads, in one-letter code: Small ribosomal subunit protein uS7 (156 aa).

It belongs to the universal ribosomal protein uS7 family. As to quaternary structure, part of the 30S ribosomal subunit. Contacts proteins S9 and S11.

In terms of biological role, one of the primary rRNA binding proteins, it binds directly to 16S rRNA where it nucleates assembly of the head domain of the 30S subunit. Is located at the subunit interface close to the decoding center, probably blocks exit of the E-site tRNA. The polypeptide is Small ribosomal subunit protein uS7 (Cupriavidus necator (strain ATCC 17699 / DSM 428 / KCTC 22496 / NCIMB 10442 / H16 / Stanier 337) (Ralstonia eutropha)).